Consider the following 353-residue polypeptide: Paraneoplastic antigen Ma1 homolog (353 aa).

The protein belongs to the PNMA family. As to expression, testis and brain specific.

The protein resides in the nucleus. It is found in the nucleolus. In Rattus norvegicus (Rat), this protein is Paraneoplastic antigen Ma1 homolog (Pnma1).